The chain runs to 191 residues: Calcium and integrin-binding protein 1 (191 aa).

The N-myristoyl glycine moiety is linked to residue G2. EF-hand domains lie at 103–138 (TPDI…LTGE) and 148–183 (EMKQ…SPDF). Residues D116, D118, D120, T122, D127, D161, D163, D165, T167, and E172 each coordinate Ca(2+).

As to quaternary structure, monomer. Interacts with the heterodimeric integrin alpha-IIb/beta3 (ITGA2B-ITGB3). Interacts with ITGA2B (via cytoplasmic domain); the interaction is direct and calcium-dependent. Interacts with the protein kinases PLK2/SNK and PRKDC (via the region immediately upstream of the kinase domain). Interacts with PLK3; the interaction inhibits PLK3 kinase activity. Interacts with PSEN2. Interacts (via C-terminus) with F8. Interacts with NBR1 (via C-terminus). Interacts with FEZ1 (via C-terminus). Interacts with UBR5 (via C-terminus); the interaction is sensitive to DNA damage, and may target CIB1 for ubiquitin-mediated degradation. Interacts with IFI6; the interaction is direct. Interacts with BCL2. Interacts with TAS1R2 (via C-terminus); the interaction is independent of the myristoylation state of CIB1. Interacts with ITPR3; the interaction occurs in a calcium dependent manner. Interacts with PTK2/FAK1. Interacts with MAP3K5; the interaction inhibits MAP3K5 activation by phosphorylation, and its subsequent interaction with TRAF2. Interacts (via C-terminal region) with STMN2 (via the N-terminal region); the interaction is direct, occurs in a calcium-dependent manner and attenuates the STMN2-induced neurite outgrowth inhibition. Interacts with SPHK1, the interaction occurs in a calcium-dependent manner. Interacts with ITGA2B (via C-terminal cytoplasmic tail); the interaction occurs upon platelet aggregation and is stabilized/increased in a calcium and magnesium-dependent manner. Interacts with PAK1 (via N-terminal region); the interaction is direct and occurs in a calcium-dependent manner. Interacts with RAC3 (via C-terminal region); the interaction induces their association with the cytoskeleton upon alpha-IIb/beta3 integrin-mediated adhesion. Interacts with ITGA5 and ITGAV. Interacts with MYO1C. Interacts with ITGA2B (via C-terminal cytoplasmic tail region). Interacts (via C-terminal region) with PPP3R1 isoform 1 and isoform 2; the interactions increase upon cardiomyocytes hypertrophy. Interacts with CACNA1C; the interaction increases upon cardiomyocytes hypertrophy. Interacts and forms a complex with TMC6 and TMC8; the interaction stabilizes each component of the complex. As to expression, expressed strongly in Sertoli cells, weakly in pachytene spermatocytes, round spermatids and condensing spermatids (at protein level). Expressed in testis. Expressed in cardiac myocytes and endothelial cells. Expressed in heart, liver, spleen, lung, kidney, brain and inner ear. In the inner ear, expressed in the vestibule, basilar membrane and spiral ganglion cells.

Its subcellular location is the membrane. It is found in the cell membrane. The protein resides in the sarcolemma. It localises to the apical cell membrane. The protein localises to the cell projection. Its subcellular location is the ruffle membrane. It is found in the filopodium tip. The protein resides in the growth cone. It localises to the lamellipodium. The protein localises to the cytoplasm. Its subcellular location is the cytoskeleton. It is found in the microtubule organizing center. The protein resides in the centrosome. It localises to the perinuclear region. The protein localises to the nucleus. Its subcellular location is the neuron projection. It is found in the perikaryon. Calcium-binding protein that plays a role in the regulation of numerous cellular processes, such as cell differentiation, cell division, cell proliferation, cell migration, thrombosis, angiogenesis, cardiac hypertrophy and apoptosis. Involved in bone marrow megakaryocyte differentiation by negatively regulating thrombopoietin-mediated signaling pathway. Participates in the endomitotic cell cycle of megakaryocyte, a form of mitosis in which both karyokinesis and cytokinesis are interrupted. Plays a role in integrin signaling by negatively regulating alpha-IIb/beta3 activation in thrombin-stimulated megakaryocytes preventing platelet aggregation. Up-regulates PTK2/FAK1 activity, and is also needed for the recruitment of PTK2/FAK1 to focal adhesions; it thus appears to play an important role in focal adhesion formation. Positively regulates cell migration on fibronectin in a CDC42-dependent manner, the effect being negatively regulated by PAK1. Functions as a negative regulator of stress activated MAP kinase (MAPK) signaling pathways. Down-regulates inositol 1,4,5-trisphosphate receptor-dependent calcium signaling. Involved in sphingosine kinase SPHK1 translocation to the plasma membrane in a N-myristoylation-dependent manner preventing TNF-alpha-induced apoptosis. Regulates serine/threonine-protein kinase PLK3 activity for proper completion of cell division progression. Plays a role in microtubule (MT) dynamics during neuronal development; disrupts the MT depolymerization activity of STMN2 attenuating NGF-induced neurite outgrowth and the MT reorganization at the edge of lamellipodia. Promotes cardiomyocyte hypertrophy via activation of the calcineurin/NFAT signaling pathway. Stimulates calcineurin PPP3R1 activity by mediating its anchoring to the sarcolemma. In ischemia-induced (pathological or adaptive) angiogenesis, stimulates endothelial cell proliferation, migration and microvessel formation by activating the PAK1 and ERK1/ERK2 signaling pathway. Also promotes cancer cell survival and proliferation. May regulate cell cycle and differentiation of spermatogenic germ cells, and/or differentiation of supporting Sertoli cells. Forms a complex with TMC6/EVER1 and TMC8/EVER2 in lymphocytes and keratynocytes where CIB1 stabilizes TMC6 and TMC8 levels and reciprocally. In Mus musculus (Mouse), this protein is Calcium and integrin-binding protein 1 (Cib1).